The sequence spans 1207 residues: Chromosomal serine/threonine-protein kinase JIL-1 (1207 aa).

The segment covering 1–19 (MSRLQKQNYEILSGTSTSR) has biased composition (polar residues). Disordered regions lie at residues 1 to 119 (MSRL…ASAR), 164 to 183 (QDME…SSSL), and 210 to 230 (SSST…LDLD). 2 positions are modified to phosphoserine: serine 29 and serine 31. Polar residues predominate over residues 45–69 (LNGQLVANGNGKTRKNSNSETMTNG). The span at 88-97 (NYNNNNNNNN) shows a compositional bias: low complexity. Polar residues predominate over residues 98–108 (SISATNGQYTN). Over residues 109-118 (SSSKTTSASA) the composition is skewed to low complexity. Over residues 164–178 (QDMEEDEPNGIEIDE) the composition is skewed to acidic residues. The segment covering 213-226 (TTPSYAMPTSNSTP) has biased composition (polar residues). Residues 261–530 (FKIIRVLGTG…ASEIKEHPFF (270 aa)) enclose the Protein kinase 1 domain. ATP is bound by residues 267 to 275 (LGTGAYGRV) and lysine 293. The active-site Proton acceptor is aspartate 389. Serine 424 bears the Phosphoserine mark. The region spanning 531 to 599 (NGINWQELRT…VAPEHLEQMR (69 aa)) is the AGC-kinase C-terminal domain. Threonine 588 is modified (phosphothreonine). Positions 623 to 886 (LELGTRTSNG…LSDILDSEWL (264 aa)) constitute a Protein kinase 2 domain. Residues 629 to 637 (TSNGAYGTC) and lysine 652 each bind ATP. Aspartate 739 serves as the catalytic Proton acceptor. Threonine 1045 is modified (phosphothreonine). Phosphoserine is present on serine 1047. The disordered stretch occupies residues 1168-1197 (TFPRPKAQLKRTKREPKVPRPPTRVQPERA).

The protein belongs to the protein kinase superfamily. Ser/Thr protein kinase family. In terms of assembly, interacts with lola. Interacts with proteins of the male specific lethal (MSL) dosage compensation complex; this interaction is mediated by the kinase domains. Requires Mg(2+) as cofactor. In terms of processing, autophosphorylated in vitro.

It localises to the nucleus. It is found in the chromosome. It catalyses the reaction L-seryl-[protein] + ATP = O-phospho-L-seryl-[protein] + ADP + H(+). It carries out the reaction L-threonyl-[protein] + ATP = O-phospho-L-threonyl-[protein] + ADP + H(+). Phosphorylates 'Ser-10' of histone H3. May regulate gene expression by establishing or maintaining the structure of more open chromatin regions. Also required for normal polytene chromosome structure, for oogenesis and for viability throughout development. Regulates the structure of polytene chromosomes in salivary glands. May phosphorylate 'Ser-1' of histone H2A. The chain is Chromosomal serine/threonine-protein kinase JIL-1 from Drosophila melanogaster (Fruit fly).